A 272-amino-acid polypeptide reads, in one-letter code: MEIYAVFGNPIAHSKSPFIHQQFAQQLDIVHPYGRVLAPINNFINTLDAFFAAGGKGANITVPFKEEAFARSDELTERASLAGAVNTLKRLEDGRLLGDNTDGIGLLSDLERLNFIRPGLRILLIGAGGASRGVLLPLLSLDCAVTITNRTASRAEALAKIFAHTGSVHATDMDKLDGCEFDLIINATSSGIRGEIPAIPASLIHPSLCCYDMFYQKGNTPFLSWCVQQGAKRYADGLGMLVGQAAHAVLLWHGVLPQVEPVIELLQQELLA.

Residues 14 to 16 (SKS) and T61 contribute to the shikimate site. The active-site Proton acceptor is the K65. E77 contacts NADP(+). Shikimate is bound by residues N86 and D102. NADP(+) is bound by residues 126–130 (GAGGA), 149–154 (NRTASR), and M213. Y215 serves as a coordination point for shikimate. G237 contacts NADP(+).

Belongs to the shikimate dehydrogenase family. In terms of assembly, homodimer.

The enzyme catalyses shikimate + NADP(+) = 3-dehydroshikimate + NADPH + H(+). Its pathway is metabolic intermediate biosynthesis; chorismate biosynthesis; chorismate from D-erythrose 4-phosphate and phosphoenolpyruvate: step 4/7. In terms of biological role, involved in the biosynthesis of the chorismate, which leads to the biosynthesis of aromatic amino acids. Catalyzes the reversible NADPH linked reduction of 3-dehydroshikimate (DHSA) to yield shikimate (SA). This Salmonella paratyphi A (strain ATCC 9150 / SARB42) protein is Shikimate dehydrogenase (NADP(+)).